Reading from the N-terminus, the 230-residue chain is MNDADVSKQIQQMVRFIRQEAEEKANEISVSAEEEFNIEKLQLVEAEKKKIRQEYERKEKQVEIRKKIEYSMQLNASRIKVLQAQDDLVSNMMEAASKEVLNVSRDHNSYKKLLKDLIVQSLLRLKEPAVLLRCRKDDHHLVESVLESAKEEYAQKLQVHPPEIIVDHHIYLPPGPGHHNAHGPSCSGGVVVASRDGKIVCENTLDARLDVVFRKKLPEIRKQLVSQVAA.

It belongs to the V-ATPase E subunit family. V-ATPase is a heteromultimeric enzyme composed of a peripheral catalytic V1 complex (components A to H) attached to an integral membrane V0 proton pore complex (components: a, c, c', c'' and d).

In terms of biological role, subunit of the peripheral V1 complex of vacuolar ATPase essential for assembly or catalytic function. V-ATPase is responsible for acidifying a variety of intracellular compartments in eukaryotic cells. The chain is V-type proton ATPase subunit E (VATE) from Citrus limon (Lemon).